The sequence spans 425 residues: Protein CLP1 homolog (425 aa).

ATP contacts are provided by residues E18, K59, and 121–126 (DVGKST).

Belongs to the Clp1 family. Clp1 subfamily.

It is found in the nucleus. Required for endonucleolytic cleavage during polyadenylation-dependent pre-mRNA 3'-end formation. The sequence is that of Protein CLP1 homolog (cbc) from Drosophila grimshawi (Hawaiian fruit fly).